Consider the following 143-residue polypeptide: uncharacterized protein (143 aa).

To E.coli YifN.

This is an uncharacterized protein from Haemophilus influenzae (strain ATCC 51907 / DSM 11121 / KW20 / Rd).